The following is a 269-amino-acid chain: Ribosomal RNA small subunit methyltransferase A (269 aa).

S-adenosyl-L-methionine contacts are provided by N18, L20, G45, E66, D91, and N112.

It belongs to the class I-like SAM-binding methyltransferase superfamily. rRNA adenine N(6)-methyltransferase family. RsmA subfamily.

Its subcellular location is the cytoplasm. The enzyme catalyses adenosine(1518)/adenosine(1519) in 16S rRNA + 4 S-adenosyl-L-methionine = N(6)-dimethyladenosine(1518)/N(6)-dimethyladenosine(1519) in 16S rRNA + 4 S-adenosyl-L-homocysteine + 4 H(+). Its function is as follows. Specifically dimethylates two adjacent adenosines (A1518 and A1519) in the loop of a conserved hairpin near the 3'-end of 16S rRNA in the 30S particle. May play a critical role in biogenesis of 30S subunits. This is Ribosomal RNA small subunit methyltransferase A from Vibrio parahaemolyticus serotype O3:K6 (strain RIMD 2210633).